The chain runs to 312 residues: Transcription initiation factor IIB-2 (312 aa).

The TFIIB-type zinc-finger motif lies at 2–34; it reads SDAFCSDCKRHTEVVFDHSAGDTVCSECGLVLE. 4 residues coordinate Zn(2+): Cys6, Cys9, Cys26, and Cys29. A run of 2 repeats spans residues 115 to 192 and 216 to 290.

It belongs to the TFIIB family. As to quaternary structure, associates with TFIID-IIA (DA complex) to form TFIID-IIA-IIB (DAB-complex) which is then recognized by polymerase II.

It is found in the nucleus. General factor that plays a major role in the activation of eukaryotic genes transcribed by RNA polymerase II. The protein is Transcription initiation factor IIB-2 (TFIIB2) of Arabidopsis thaliana (Mouse-ear cress).